Here is a 164-residue protein sequence, read N- to C-terminus: UPF0114 protein YqhA (164 aa).

The next 3 helical transmembrane spans lie at 15–35, 53–73, and 136–156; these read LLAP…LKFF, LILV…LVMV, and LMWY…MGYL.

It belongs to the UPF0114 family.

It localises to the cell membrane. This Shigella dysenteriae serotype 1 (strain Sd197) protein is UPF0114 protein YqhA.